Here is a 158-residue protein sequence, read N- to C-terminus: Protein EOLA2 (158 aa).

Residues 6–92 form the ASCH domain; the sequence is LSFRQPYAGF…IAGLVDIGET (87 aa).

Belongs to the EOLA family.

The polypeptide is Protein EOLA2 (Homo sapiens (Human)).